A 328-amino-acid polypeptide reads, in one-letter code: C-type lectin domain family 4 member K (328 aa).

Residues 1–43 (MTVEKEAPDAHFTVDKQNISLWPREPPPKSGPSLVPGKTPTVR) lie on the Cytoplasmic side of the membrane. The chain crosses the membrane as a helical; Signal-anchor for type II membrane protein span at residues 44-64 (AALICLTLVLVASVLLQAVLY). Residues 65–328 (PRFMGTISDV…CKRPYVPSEP (264 aa)) lie on the Extracellular side of the membrane. 3 N-linked (GlcNAc...) asparagine glycosylation sites follow: Asn-87, Asn-113, and Asn-180. Positions 145-190 (EEVSTLNAQIPELKSDLEKASALNTKIRALQGSLENMSKLLKRQND) form a coiled coil. One can recognise a C-type lectin domain in the interval 202–320 (FKGNFYYFSL…CDKTFLFICK (119 aa)). Cystine bridges form between Cys-223-Cys-319 and Cys-295-Cys-311.

As to quaternary structure, homotrimer. As to expression, exclusively expressed by Langerhans cells. Expressed in astrocytoma and malignant ependymoma, but not in normal brain tissues.

Its subcellular location is the membrane. Its function is as follows. Calcium-dependent lectin displaying mannose-binding specificity. Induces the formation of Birbeck granules (BGs); is a potent regulator of membrane superimposition and zippering. Binds to sulfated as well as mannosylated glycans, keratan sulfate (KS) and beta-glucans. Facilitates uptake of antigens and is involved in the routing and/or processing of antigen for presentation to T cells. Major receptor on primary Langerhans cells for Candida species, Saccharomyces species, and Malassezia furfur. Protects against human immunodeficiency virus-1 (HIV-1) infection. Binds to high-mannose structures present on the envelope glycoprotein which is followed by subsequent targeting of the virus to the Birbeck granules leading to its rapid degradation. The polypeptide is C-type lectin domain family 4 member K (CD207) (Homo sapiens (Human)).